A 128-amino-acid chain; its full sequence is Large ribosomal subunit protein bL17 (128 aa).

Belongs to the bacterial ribosomal protein bL17 family. Part of the 50S ribosomal subunit. Contacts protein L32.

The chain is Large ribosomal subunit protein bL17 from Hydrogenovibrio crunogenus (strain DSM 25203 / XCL-2) (Thiomicrospira crunogena).